A 97-amino-acid chain; its full sequence is Small ribosomal subunit protein uS19 (97 aa).

The protein belongs to the universal ribosomal protein uS19 family.

Its function is as follows. Protein S19 forms a complex with S13 that binds strongly to the 16S ribosomal RNA. The polypeptide is Small ribosomal subunit protein uS19 (Pelagibacter ubique (strain HTCC1062)).